Consider the following 453-residue polypeptide: Cysteine--tRNA ligase (453 aa).

Cys-31 is a Zn(2+) binding site. Positions 33–43 match the 'HIGH' region motif; that stretch reads PTVYDNPHIGN. Zn(2+) is bound by residues Cys-213, His-238, and Glu-242. Residues 271–275 carry the 'KMSKS' region motif; that stretch reads KMAKS. Lys-274 serves as a coordination point for ATP.

This sequence belongs to the class-I aminoacyl-tRNA synthetase family. Monomer. It depends on Zn(2+) as a cofactor.

The protein resides in the cytoplasm. The enzyme catalyses tRNA(Cys) + L-cysteine + ATP = L-cysteinyl-tRNA(Cys) + AMP + diphosphate. This Pelagibacter ubique (strain HTCC1062) protein is Cysteine--tRNA ligase.